Reading from the N-terminus, the 356-residue chain is Putative [LysW]-L-2-aminoadipate/[LysW]-L-glutamate phosphate reductase (356 aa).

11 to 14 (SGYT) lines the NADP(+) pocket. Cys157 is an active-site residue. NADP(+) is bound at residue Asn323.

Belongs to the NAGSA dehydrogenase family. Type 1 subfamily. LysY sub-subfamily.

The protein localises to the cytoplasm. The catalysed reaction is [amino-group carrier protein]-C-terminal-N-(1-carboxy-5-oxopentan-1-yl)-L-glutamine + phosphate + NADP(+) = [amino-group carrier protein]-C-terminal-N-(1-carboxy-5-phosphooxy-5-oxopentan-1-yl)-L-glutamine + NADPH + H(+). It catalyses the reaction [amino-group carrier protein]-C-terminal-gamma-(L-glutamyl-5-semialdehyde)-L-glutamate + phosphate + NADP(+) = [amino-group carrier protein]-C-terminal-gamma-(5-phospho-L-glutamyl)-L-glutamate + NADPH + H(+). Its pathway is amino-acid biosynthesis; L-lysine biosynthesis via AAA pathway; L-lysine from L-alpha-aminoadipate (Thermus route): step 3/5. It functions in the pathway amino-acid biosynthesis; L-arginine biosynthesis. Involved in both the arginine and lysine biosynthetic pathways. This chain is Putative [LysW]-L-2-aminoadipate/[LysW]-L-glutamate phosphate reductase, found in Ignicoccus hospitalis (strain KIN4/I / DSM 18386 / JCM 14125).